A 230-amino-acid polypeptide reads, in one-letter code: KIFCFLMLLGLSASAATATIFPQCSQAPITSLLPPYLSPAVSSVCENPILQPYRIQQAIAAGILPLSPLFLQQPSALLQQLPLVHLLAQNIRAQQLQQLVLGNLAAYSQQHQFLPFNQLAALNSAAYLQQQLPFSQLAAAYPQQFLPFNQLAALNSAAYLQQQQLPPFSQLADVSPAAFLTQQQLLPFYLHAAPNAGTVLQLQQLLPFDQLALTNPTAFYQQPIIGGALF.

The signal sequence occupies residues 1–18 (KIFCFLMLLGLSASAATA).

It belongs to the zein family.

Zeins are major seed storage proteins. The polypeptide is Zein-alpha 19A2 (Zea mays (Maize)).